A 493-amino-acid chain; its full sequence is Leucine-rich repeat-containing protein 14 (493 aa).

An LRR 1; degenerate repeat occupies 111-146 (KHALRVLDMTGLLDDGVEQDPGTMSMWDCTAAVART). The stretch at 194-218 (RLCCRDLRAEDLPMRNTVALLQLLD) is one LRR 2; degenerate repeat. The stretch at 219–246 (AGCLRRVDLRFNNLGLRGLSVIIPHVAR) is one LRR 3; degenerate repeat. The LRR 4; degenerate repeat unit spans residues 247-282 (FQHLASLRLHYVHGDSRQPSVDGEDNFRYFLAQMGR). 5 LRR repeats span residues 283–307 (FTCL…LSTL), 308–339 (QSPL…AHLK), 340–360 (KLDL…QGLL), 364–391 (AATL…ILTQ), and 392–416 (CASL…LLRD).

This sequence belongs to the PRAME family. LRRC14 subfamily. As to quaternary structure, interacts with IKBKB; disrupts IKBKB-IKBKG interaction preventing I-kappa-B-kinase (IKK) core complex formation and leading to a decrease of IKBKB phosphorylation and NF-kappaB activation. Interacts with CHUK.

It localises to the cytoplasm. In terms of biological role, negatively regulates Toll-like receptor-mediated NF-kappa-B signaling by disrupting IKK core complex formation through interaction with IKBKB. The sequence is that of Leucine-rich repeat-containing protein 14 from Homo sapiens (Human).